The following is a 395-amino-acid chain: Innexin inx3 (395 aa).

The Cytoplasmic portion of the chain corresponds to 1-37 (MAVFGMVSAVSGFIKIRYLLDKAVIDNMVFRCHYRIT). A helical membrane pass occupies residues 38-58 (TAILFTCCIIVTANNLIGDPI). At 59-114 (SCINDGAIPMHVINTFCWITYTYTIPGQQHRQIGTDVAGPGLGNEYGQEKRYHSYY) the chain is on the extracellular side. Residues 115-135 (QWVPFVLFFQGLMFYVPHWVW) form a helical membrane-spanning segment. Residues 136-183 (KNMEDGKIRMITDGLRGMVSVPDDYRRDRQDRILKYFVNSLNTHNGYS) lie on the Cytoplasmic side of the membrane. Residues 184 to 204 (FAYFFCELLNFINVIVNIFMV) traverse the membrane as a helical segment. Residues 205 to 272 (DKFLGGAFMS…VLALNILNEK (68 aa)) are Extracellular-facing. Residues 273–293 (IYIFLWFWFIILATISGVAVL) traverse the membrane as a helical segment. Topologically, residues 294–395 (YSLVVIMMPT…TFGGGKETET (102 aa)) are cytoplasmic. Residues S366 and S377 each carry the phosphoserine modification. Y381 bears the Phosphotyrosine mark.

It belongs to the pannexin family. As to quaternary structure, heterooligomer of Inx2 (via cytoplasmic C-terminal region) and Inx3 (via cytoplasmic C-terminal region). As to expression, in ovary, expressed in nurse cells and follicle cells. Expressed in embryonic epithelial cells. Ubiquitously expressed in stage 5 embryos. Expressed in foregut and hindgut from stage 11-17 and in proventriculus, epidermis and CNS in stage 16 embryos (at protein level). Expressed in anterior and ventral regions in stage 8 embryos. Repeating epidermal pattern emerges at stage 11, refines to one or two cells at each side of the segment borders by stage 13. Expressed in the imaginal wing disk. In pupae, expressed in the CNS and in secondary and tertiary pigment cells of the retina.

Its subcellular location is the cell membrane. It is found in the cell junction. The protein localises to the gap junction. It localises to the cytoplasm. The protein resides in the lateral cell membrane. Its subcellular location is the apicolateral cell membrane. Functionally, structural components of the gap junctions. Essential for proper epithelial development of the epidermis. The polypeptide is Innexin inx3 (Inx3) (Drosophila melanogaster (Fruit fly)).